Reading from the N-terminus, the 283-residue chain is MLRVAVPNKGSLSESAAEILSEAGYRRRTDSRDLTVLDPSNQVEFFFLRPKDIAIYVGSGELDLGITGRDLARDSGAPVAERLSLGFGRSTFRYAAPAGKDWKVEDLAGLRIATSYPNLVRDDLSARGIEASVIRLDGAVEISIQLGVADAIADVVGSGRTLRQHNLVAFGDTLCDSEGVLIERAGSPADDSARNQLVERVRGIVFAQQNLMLDYDCPKTILDDALKITPGLESPTLSPLADENWVAVRAMVPIKGHNGVMDELADLGAKAILASNIRSCRAL.

It belongs to the ATP phosphoribosyltransferase family. Long subfamily. The cofactor is Mg(2+).

The protein localises to the cytoplasm. The catalysed reaction is 1-(5-phospho-beta-D-ribosyl)-ATP + diphosphate = 5-phospho-alpha-D-ribose 1-diphosphate + ATP. It participates in amino-acid biosynthesis; L-histidine biosynthesis; L-histidine from 5-phospho-alpha-D-ribose 1-diphosphate: step 1/9. Feedback inhibited by histidine. Its function is as follows. Catalyzes the condensation of ATP and 5-phosphoribose 1-diphosphate to form N'-(5'-phosphoribosyl)-ATP (PR-ATP). Has a crucial role in the pathway because the rate of histidine biosynthesis seems to be controlled primarily by regulation of HisG enzymatic activity. The chain is ATP phosphoribosyltransferase from Rhodococcus opacus (strain B4).